The following is a 333-amino-acid chain: DNA-directed RNA polymerase subunit alpha (333 aa).

The segment at 1–227 (MRKIKVAPFM…VMNKQLSVFN (227 aa)) is alpha N-terminal domain (alpha-NTD). The interval 247 to 333 (ELKPFLAAVD…LVKKLEQLKA (87 aa)) is alpha C-terminal domain (alpha-CTD).

Belongs to the RNA polymerase alpha chain family. In terms of assembly, homodimer. The RNAP catalytic core consists of 2 alpha, 1 beta, 1 beta' and 1 omega subunit. When a sigma factor is associated with the core the holoenzyme is formed, which can initiate transcription.

The enzyme catalyses RNA(n) + a ribonucleoside 5'-triphosphate = RNA(n+1) + diphosphate. Functionally, DNA-dependent RNA polymerase catalyzes the transcription of DNA into RNA using the four ribonucleoside triphosphates as substrates. The sequence is that of DNA-directed RNA polymerase subunit alpha from Sulfurovum sp. (strain NBC37-1).